The sequence spans 953 residues: Ubiquitin carboxyl-terminal hydrolase CYLD (953 aa).

An interaction with TRIP region spans residues 106 to 590; it reads CEERLSLFRN…LEIMIGKKKG (485 aa). CAP-Gly domains lie at 153-198 and 253-286; these read LAER…VFVA and DVLP…VQLC. The disordered stretch occupies residues 318–350; that stretch reads FMSRGVGDKGSSSHNKPKVTGSTSDPGSRNRSE. Residues 327 to 346 show a composition bias toward polar residues; the sequence is GSSSHNKPKVTGSTSDPGSR. A Phosphoserine modification is found at S384. The segment at 387-410 is disordered; sequence EMSSDFGHSSPPPQPPSMNSLSSE. The segment at 391–466 is interaction with TRAF2; sequence DFGHSSPPPQ…MPSSSGNAHG (76 aa). Residues S415 and S419 each carry the phosphoserine modification. An interaction with IKBKG/NEMO region spans residues 467–681; the sequence is LEVGSLAEVK…FTSEEKDPEE (215 aa). The CAP-Gly 3 domain occupies 489-532; sequence GQPPGLSDVLAGLELEDECAGCTDGTFRGTRYFTCALKKALFVK. Residues 589–947 enclose the USP domain; that stretch reads KGIQGHYNSC…DAYMCMYQSP (359 aa). Residue C598 is the Nucleophile of the active site. Residues 778–830 form a B-box region; sequence LEDTPRQCRICGGLAMYECRECYDDPDISAGKIKQFCKTCSTQVHLHPRRLNH. Zn(2+) is bound by residues C785, C788, C796, C799, C814, C817, H822, and H830. Residue H868 is the Proton acceptor of the active site.

It belongs to the peptidase C19 family. Interacts (via CAP-Gly domain) with IKBKG/NEMO (via proline-rich C-terminal region). Interacts with TRAF2 and TRIP. Interacts with PLK1, DVL1, DVL3, MAVS, TBK1, IKKE and RIGI. Interacts (via CAP-Gly domain) with microtubules. Interacts with HDAC6 and BCL3. Interacts with MAP3K7. Identified in a complex with TRAF6 and SQSTM1. Interacts with OPTN and SQSTM1. Interacts with CEP350. Interacts with RNF31; the interaction is indirect and is mediated via SPATA2. Interacts with SPATA2 (via the PUB domain); the interaction is direct and recruits CYLD to the LUBAC complex, thereby regulating TNF-alpha-induced necroptosis. Phosphorylated on several serine residues by IKKA and/or IKKB in response to immune stimuli. Phosphorylation requires IKBKG. Phosphorylation abolishes TRAF2 deubiquitination, interferes with the activation of Jun kinases, and strongly reduces CD40-dependent gene activation by NF-kappa-B. In terms of processing, ubiquitinated. Polyubiquitinated in hepatocytes treated with palmitic acid. Ubiquitination is mediated by E3 ligase TRIM47 and leads to proteasomal degradation.

It is found in the cytoplasm. It localises to the perinuclear region. Its subcellular location is the cytoskeleton. The protein resides in the cell membrane. The protein localises to the microtubule organizing center. It is found in the centrosome. It localises to the spindle. Its subcellular location is the cilium basal body. It carries out the reaction Thiol-dependent hydrolysis of ester, thioester, amide, peptide and isopeptide bonds formed by the C-terminal Gly of ubiquitin (a 76-residue protein attached to proteins as an intracellular targeting signal).. Its function is as follows. Deubiquitinase that specifically cleaves 'Lys-63'- and linear 'Met-1'-linked polyubiquitin chains and is involved in NF-kappa-B activation and TNF-alpha-induced necroptosis. Negatively regulates NF-kappa-B activation by deubiquitinating upstream signaling factors. Contributes to the regulation of cell survival, proliferation and differentiation via its effects on NF-kappa-B activation. Negative regulator of Wnt signaling. Inhibits HDAC6 and thereby promotes acetylation of alpha-tubulin and stabilization of microtubules. Plays a role in the regulation of microtubule dynamics, and thereby contributes to the regulation of cell proliferation, cell polarization, cell migration, and angiogenesis. Required for normal cell cycle progress and normal cytokinesis. Inhibits nuclear translocation of NF-kappa-B. Plays a role in the regulation of inflammation and the innate immune response, via its effects on NF-kappa-B activation. Dispensable for the maturation of intrathymic natural killer cells, but required for the continued survival of immature natural killer cells. Negatively regulates TNFRSF11A signaling and osteoclastogenesis. Involved in the regulation of ciliogenesis, allowing ciliary basal bodies to migrate and dock to the plasma membrane; this process does not depend on NF-kappa-B activation. Ability to remove linear ('Met-1'-linked) polyubiquitin chains regulates innate immunity and TNF-alpha-induced necroptosis: recruited to the LUBAC complex via interaction with SPATA2 and restricts linear polyubiquitin formation on target proteins. Regulates innate immunity by restricting linear polyubiquitin formation on RIPK2 in response to NOD2 stimulation. Involved in TNF-alpha-induced necroptosis by removing linear ('Met-1'-linked) polyubiquitin chains from RIPK1, thereby regulating the kinase activity of RIPK1. Negatively regulates intestinal inflammation by removing 'Lys-63' linked polyubiquitin chain of NLRP6, thereby reducing the interaction between NLRP6 and PYCARD/ASC and formation of the NLRP6 inflammasome. Does not catalyze deubiquitination of heterotypic 'Lys-63'-/'Lys-48'-linked branched ubiquitin chains. Removes 'Lys-63' linked polyubiquitin chain of MAP3K7, which inhibits phosphorylation and blocks downstream activation of the JNK-p38 kinase cascades. Also removes 'Lys-63'-linked polyubiquitin chains of MAP3K1 and MA3P3K3, which inhibit their interaction with MAP2K1 and MAP2K2. This Rattus norvegicus (Rat) protein is Ubiquitin carboxyl-terminal hydrolase CYLD (Cyld).